The following is a 230-amino-acid chain: uncharacterized protein (230 aa).

The tract at residues 118-195 (LLDEILPKEP…SKREMERLER (78 aa)) is disordered. Basic residues predominate over residues 136-146 (QKKKEKRAALK). Basic and acidic residues-rich tracts occupy residues 160–170 (ETDLYGDRDSF) and 179–195 (QRSE…RLER).

This is an uncharacterized protein from Schizosaccharomyces pombe (strain 972 / ATCC 24843) (Fission yeast).